The chain runs to 287 residues: MSEIGLVKIYSGKVRDLYEIDDKRMLMVASDRLSAFDVILDDPIPSKGEILTQISNFWFKKLAHIMPNHFTGQTVYDVLPENEAKVLEKRAVVAKKLTPVKVEAIVRGYLAGSGWKDYQKTGSVCGIRLPEGMQEAQQLPEVIFTPSTKAAVGDHDENISFEECGRIIGKELAEEVRAKAVRLYTEAAEYAKSRGIIICDTKFEFGLDTNGTLTLMDEVLTPDSSRFWPADQYKVGTNPPSFDKQFVRDWLEQSGWNKKAPAPKVPADVIQKTVEKYREALTLLTQD.

This sequence belongs to the SAICAR synthetase family.

It catalyses the reaction 5-amino-1-(5-phospho-D-ribosyl)imidazole-4-carboxylate + L-aspartate + ATP = (2S)-2-[5-amino-1-(5-phospho-beta-D-ribosyl)imidazole-4-carboxamido]succinate + ADP + phosphate + 2 H(+). Its pathway is purine metabolism; IMP biosynthesis via de novo pathway; 5-amino-1-(5-phospho-D-ribosyl)imidazole-4-carboxamide from 5-amino-1-(5-phospho-D-ribosyl)imidazole-4-carboxylate: step 1/2. The chain is Phosphoribosylaminoimidazole-succinocarboxamide synthase from Neisseria meningitidis serogroup C (strain 053442).